A 177-amino-acid chain; its full sequence is Novel acetylcholine receptor chaperone (177 aa).

Residues 1-5 (MASPR) lie on the Cytoplasmic side of the membrane. A helical transmembrane segment spans residues 6-26 (TVTVVALSVALGLFFVFMGTI). The Lumenal segment spans residues 27–61 (KLTPRLSKDAYSEMKRAYKSYVRALPLLKKMGINS). The interval 43–54 (AYKSYVRALPLL) is interaction with NGFR. The helical transmembrane segment at 62–82 (ILLRKSIGALEVACGIVMTLV) threads the bilayer. Topologically, residues 83–88 (PGRPKD) are cytoplasmic. A helical transmembrane segment spans residues 89-109 (VANFFLLLLVLAVLFFHQLVG). At 110–114 (DPLKR) the chain is on the lumenal side. A helical membrane pass occupies residues 115 to 132 (YAHALVFGILLTCRLLIA). Residues 133 to 177 (RKPEDRSSEKKSSPPGNAGSDGNAGNTEEQPSLYEKAPQGKMKLS) are Cytoplasmic-facing. A disordered region spans residues 136-177 (EDRSSEKKSSPPGNAGSDGNAGNTEEQPSLYEKAPQGKMKLS).

Belongs to the DoxX family. As to quaternary structure, may interact with NGFR. Interacts with RPN1, RPN2 and CANX.

It is found in the peroxisome membrane. It localises to the cytoplasmic vesicle. Its subcellular location is the endoplasmic reticulum membrane. Its function is as follows. Molecular chaperone which mediates the proper assembly and functional expression of the nicotinic acetylcholine receptors (nAChRs) throughout the brain. Essential for the proper folding, assembly, function and surface trafficking of alpha-7 (CHRNA7), alpha-4-beta-2, alpha-3-beta-2 and alpha-3-beta-4 receptors. Stably associates with ribophorin-1 (RPN1) and ribophorin-2 (RPN2) (components of the oligosaccharyl transferase (OST) complex) and with calnexin (CANX), both of which are critical for NACHO-mediated effects on CHRNA7 assembly and function. Facilitates the proper folding and assembly of alpha-6-beta-2 and alpha-6-beta-2-beta-3 receptors and acts at early stages of the nAChRs subunit assembly. Promotes the expression of the alpha-4(2):beta-2(3) stoichiometric form over the alpha-4(3):beta-2(2) form. This chain is Novel acetylcholine receptor chaperone (TMEM35A), found in Bos taurus (Bovine).